Consider the following 232-residue polypeptide: Phosphoadenosine 5'-phosphosulfate reductase (232 aa).

The active-site Nucleophile; cysteine thiosulfonate intermediate is cysteine 228.

It belongs to the PAPS reductase family. CysH subfamily.

It localises to the cytoplasm. It catalyses the reaction [thioredoxin]-disulfide + sulfite + adenosine 3',5'-bisphosphate + 2 H(+) = [thioredoxin]-dithiol + 3'-phosphoadenylyl sulfate. It participates in sulfur metabolism; hydrogen sulfide biosynthesis; sulfite from sulfate: step 3/3. In terms of biological role, catalyzes the formation of sulfite from phosphoadenosine 5'-phosphosulfate (PAPS) using thioredoxin as an electron donor. The chain is Phosphoadenosine 5'-phosphosulfate reductase from Synechococcus sp. (strain ATCC 27144 / PCC 6301 / SAUG 1402/1) (Anacystis nidulans).